Reading from the N-terminus, the 421-residue chain is Histidine--tRNA ligase (421 aa).

It belongs to the class-II aminoacyl-tRNA synthetase family. Homodimer.

The protein localises to the cytoplasm. The enzyme catalyses tRNA(His) + L-histidine + ATP = L-histidyl-tRNA(His) + AMP + diphosphate + H(+). This Caldicellulosiruptor bescii (strain ATCC BAA-1888 / DSM 6725 / KCTC 15123 / Z-1320) (Anaerocellum thermophilum) protein is Histidine--tRNA ligase.